Reading from the N-terminus, the 291-residue chain is Dihydroorotate dehydrogenase A (fumarate) (291 aa).

FMN-binding positions include Ser18 and Lys42–Ser43. Substrate-binding positions include Lys42, Asn66–Leu70, and Asn126. Asn126 contributes to the FMN binding site. Catalysis depends on Cys129, which acts as the Nucleophile. FMN contacts are provided by Lys164 and Ile190. Residue Asn191 to Thr192 coordinates substrate. FMN is bound by residues Gly216, Gly242–Gly243, and Gly264–Ser265.

This sequence belongs to the dihydroorotate dehydrogenase family. Type 1 subfamily. Homodimer. FMN is required as a cofactor.

It is found in the cytoplasm. The catalysed reaction is (S)-dihydroorotate + fumarate = orotate + succinate. The protein operates within pyrimidine metabolism; UMP biosynthesis via de novo pathway. In terms of biological role, catalyzes the conversion of dihydroorotate to orotate with fumarate as the electron acceptor. The sequence is that of Dihydroorotate dehydrogenase A (fumarate) (pyrD) from Lacticaseibacillus paracasei (strain ATCC 334 / BCRC 17002 / CCUG 31169 / CIP 107868 / KCTC 3260 / NRRL B-441) (Lactobacillus paracasei).